A 1081-amino-acid polypeptide reads, in one-letter code: SPX and EXS domain-containing protein 4 (1081 aa).

The SPX domain occupies 1–483; that stretch reads MKFRDLLNDH…RIISSECRKY (483 aa). 3 disordered regions span residues 86-118, 160-271, and 318-354; these read ETAD…SVGF, QRNN…HDKN, and VKGD…DEDN. Low complexity-rich tracts occupy residues 90 to 110, 161 to 196, and 211 to 228; these read SPAI…NNNN, RNNN…TRNI, and SPFS…SPSP. A compositionally biased stretch (acidic residues) spans 244-264; it reads KDEDEEEEGEEEEDIEMEQLE. A compositionally biased stretch (basic and acidic residues) spans 319 to 336; that stretch reads KGDKSNDKNNDKSNDKNN. Residues 337 to 349 are compositionally biased toward low complexity; that stretch reads NKNNKNNNNNNNL. 9 helical membrane passes run 536–556, 573–593, 622–642, 654–674, 703–723, 776–796, 803–823, 854–874, and 887–907; these read NLFT…QVVF, LAWL…MFSL, YLKY…LYID, ILIP…PFPI, FFMS…QSMV, ITSA…YIAL, WSII…YKFY, WIYY…LIIF, and PLFL…FIFF. The 203-residue stretch at 738–940 folds into the EXS domain; sequence FCSQSRFFAL…SQEYNNYMDE (203 aa). Positions 939–1031 are disordered; it reads DEKKKRRKRK…INDHMNPDTG (93 aa). The span at 942–951 shows a compositional bias: basic residues; sequence KKRRKRKQKQ. Over residues 952 to 970 the composition is skewed to low complexity; it reads SKSNNNNNNNNNNNNNNNN. A compositionally biased stretch (polar residues) spans 977–1003; sequence SSNNVETDETITSSNNTDSSHQKQPLT. Over residues 1013-1022 the composition is skewed to basic and acidic residues; the sequence is NHQDHHDLSI.

This sequence belongs to the SYG1 (TC 2.A.94) family.

Its subcellular location is the membrane. This chain is SPX and EXS domain-containing protein 4, found in Dictyostelium discoideum (Social amoeba).